Reading from the N-terminus, the 26-residue chain is Delta-conotoxin Am2766 (26 aa).

3 disulfide bridges follow: Cys1–Cys16, Cys8–Cys20, and Cys15–Cys24. Glutamic acid 1-amide is present on Glu26.

In terms of tissue distribution, expressed by the venom duct.

The protein localises to the secreted. Functionally, delta-conotoxins bind to site 6 of voltage-gated sodium channels (Nav) and inhibit the inactivation process. The polypeptide is Delta-conotoxin Am2766 (Conus amadis (Amadis cone)).